Here is a 582-residue protein sequence, read N- to C-terminus: Type I secretion system ATP-binding protein PrsD (582 aa).

Helical transmembrane passes span 22-42, 59-79, and 148-168; these read FIGV…GSFF, LIAL…FELI, and IAIC…GGLI. Residues 22–301 enclose the ABC transmembrane type-1 domain; that stretch reads FIGVGVASAL…AIGNWRGLVA (280 aa). One can recognise an ABC transporter domain in the interval 332–568; sequence LTVEGLASGP…VLRPQQVERQ (237 aa). 366–373 lines the ATP pocket; it reads GPSASGKS.

It belongs to the ABC transporter superfamily. Part of a type I secretion system composed of PrsD and PrsE.

The protein resides in the cell inner membrane. Its function is as follows. Mediates secretion of glycanase ExsH. This is Type I secretion system ATP-binding protein PrsD (prsD) from Rhizobium meliloti (strain 1021) (Ensifer meliloti).